Here is a 382-residue protein sequence, read N- to C-terminus: Quinolinate synthase (382 aa).

Residues H63 and S84 each coordinate iminosuccinate. C129 contributes to the [4Fe-4S] cluster binding site. Iminosuccinate contacts are provided by residues 155 to 157 (YAN) and S172. C216 contributes to the [4Fe-4S] cluster binding site. Residues 242 to 244 (HPE) and T259 contribute to the iminosuccinate site. C313 contributes to the [4Fe-4S] cluster binding site.

This sequence belongs to the quinolinate synthase family. Type 1 subfamily. The cofactor is [4Fe-4S] cluster.

It localises to the cytoplasm. The catalysed reaction is iminosuccinate + dihydroxyacetone phosphate = quinolinate + phosphate + 2 H2O + H(+). The protein operates within cofactor biosynthesis; NAD(+) biosynthesis; quinolinate from iminoaspartate: step 1/1. In terms of biological role, catalyzes the condensation of iminoaspartate with dihydroxyacetone phosphate to form quinolinate. The polypeptide is Quinolinate synthase (Ralstonia pickettii (strain 12J)).